The primary structure comprises 174 residues: Scytalone dehydratase-like protein Arp1 (174 aa).

Y49 is a binding site for substrate. Catalysis depends on residues H84 and H109. N130 provides a ligand contact to substrate.

Belongs to the scytalone dehydratase family. As to quaternary structure, homotrimer. Each subunit contains an active site, located in the central part of the hydrophobic core of the monomer, which functions independently.

In terms of biological role, scytalone dehydratase-like protein; part of the Pks2 gene cluster that mediates the formation of infectious structures (appressoria), enabling these fungi to kill insects faster. The product of the Pks2 gene cluster is different from the one of Pks1 and has still not been identified. The sequence is that of Scytalone dehydratase-like protein Arp1 from Metarhizium majus (strain ARSEF 297).